The sequence spans 2178 residues: MQTTQNRLKTKRYASFFLNPKLNRPIQKKGWIKKADFNQLTDSLCKQSLKAYNEKLYSPLSQFKIPDFLNIQRSSFRQFLKSGLITEFKNCKSITNSNQTFEVFFYAEHYKLNRPKWTPKQAILKKKSYSSQLYLPIQLSNYQTEEVHLQWVLLANLPLMTKNGHFILNGCPRVLMNQIVRSPGVYFRKVVKNQKTVYSADFIAQRGSWLRLEVDTKKGDIWAKLKKTPKIPIFTFLRALGLTLPILNNSIDFAKLRYLLQFKEESKRSKKIKDFLGPGINNSLDIVEFRSLLKSLKKYMKPKPAKKSSKKQKTKKIKKWLTPFVCTTYFQSLLELCQKLYPQKKFLELDPKLAQKFLFRKFQNPRTYDLSILGREKINKKLGISIPLEKTILTSQDVLFACLFLMDLLQGLVISDDIDDLKNRKIKPSGELIQTQLSTGLIRLEKIIREKLKQPKQDSDSFSNLFSVKPLNQAFRDFFGTNPLSQLMDQTNALSEITHKRRLSSLGPGGINRETAGMAIRGIHPTHYGRICPIETPEGQNAGLVNSFTIFSHLNTKSFIETPFYKMYKGFILKNKNPFLFSSDQERNLVLAPGDIQTSLFHFLPPGVPIPSRQFKEFKRVSRNEINFIAVSPIQMISIATSLIPFLEHNDGNRALMGSNMQRQAVPTVRPSKPIVGTGLESRVISDVGHGLQVQKSGFVSYVDGNKIIIYSKKRIDQPFFFDTKKLHFPKKKVPFLNLDLQQQNTCRSSFKKKLVKSANIFTFKEKQLYQLSKIKNKKQRVCFEKSLKSQDFSSLLNFLTLFNIKTKVQAEKKASVQDASFILVPKKNLDLEVNKRIFLPVFLKKRNEYNFLNYYKLTERTLYSGFSILPFKLTNKGNYFNNKQISCLSNSLFLNDFLGQFHLLKFFSTKIFYSKLSRNFKPFISKRSLVLINKFSHQKLLFSYCKIILIHFYTKFNKKTPKNFLLNTKLSSKLMKRKDFSHFFRKDEKTMPIQNLTNFKSAHLHSQTAVKGVCQQIRSARKTQIANPFWYNSFPLFLIKSSPLTPLLFRRSFVPKVFNPLGLHFAYQQSKGPKHVSRTFKTLDRNEQKFSYNQKFQKLNFIFVKPYKFKRKNSPFAPFARSSKARGSAKAIFSQAQRLWGEKVFLVQNKENLPQTLGSCKIMTNQFYLKFSLLLKQQKKNFSNKKTGMENQNCQNSLTSQKNGFQCLKKMEPLHFPTKKSSISTLSFVKKILPYFQHPLLNLTTQNKIKNKLMIFKKPFLFWSACFADKQSLRSILFSLKKSQKVTTLKKTKVKKKFEIVYNENKKKYFQKINKNFFLPLLCRTRNLNFASNSLLFQISYPVAVNQSNLIQRNLISQELKHNSKRFIKTLLKIKPFVGKFVFPFCPICLKRKASIETQSFVKKSDKNFQFCFCFSRKKQKTLKPLLRIKSSDKMNTLKPLQKFSLLENFKVPPQSSLTARDKILRSTIGTKGLNDSLSMKSTDGEYAINDKKRRVEIINSSSLFYNNLIPQNYILNNYHRSNQDTYMIHRPLVQEGQWVEKGDILADSSVSVQGELSIGQNILVGYIPWEGYNFEDAVLISERLIFDDLYTSLHIERYEVEIRDTQFGLEQITNQIPNEKGEYDYIDSNGIAKIGTWVKEGDILVGKIAPIGQKKLTAYENLLYDILNKEIPKTRDTSLRVPRGVTGRVIHVEIVETTKKKGNDSSIFAKSLKFPKKQKLKRVTSPEYWYPVNTKKDQKVQSFSFKNKSEKLFLTPVQSYFNKEAKTKNPKLNSPFFYLNKRNPDFNLKRNKRIAKEMYFFNKNEKIKLSTLQIKIKGLEKKEFSFPKILKARFSLLQKAQTANLKIEKFLDDKFWNNVNYSNKNFSRNGSQKENSNADGLQFYNPLKKTKTKVLQPMEKTSFSGPQKVHIYLAEKRKLQIGDKIAGRHGNKGIISNILPRQDMPYLSDGTPLDIVLNPLGVPSRMNVGQILECLLGMAGYYLKQNFKIQPFDEIYGCEASRSLVYSKLYEARIKTGQDWLFNANHPGKTRLFDGRTGDCFKQPVTVGVAYILKLIHLVDDKIHARSTGPYSLVTQQPLRGRSKQGGQRVGEMEVWALEGFGAAYILQEILTIKSDDLKGRNQVMNSILNNKPVNFGLPESFKVLVRELQSLCLDIAIYRYRENGTPTKININNFW.

3 insert regions span residues 269–325, 714–1508, and 1703–1900; these read SKKI…TPFV, KRID…LFYN, and KGND…LQPM.

Belongs to the RNA polymerase beta chain family. In plastids the minimal PEP RNA polymerase catalytic core is composed of four subunits: alpha, beta, beta', and beta''. When a (nuclear-encoded) sigma factor is associated with the core the holoenzyme is formed, which can initiate transcription.

The protein resides in the plastid. It is found in the chloroplast. It carries out the reaction RNA(n) + a ribonucleoside 5'-triphosphate = RNA(n+1) + diphosphate. In terms of biological role, DNA-dependent RNA polymerase catalyzes the transcription of DNA into RNA using the four ribonucleoside triphosphates as substrates. In Tupiella akineta (Green alga), this protein is DNA-directed RNA polymerase subunit beta.